Reading from the N-terminus, the 355-residue chain is Methyltransferase FUS9 (355 aa).

S-adenosyl-L-homocysteine contacts are provided by Tyr18, Asn63, Asp86, Ser123, and Phe124. Residue Phe231 coordinates Mg(2+).

Belongs to the methyltransferase superfamily. Type-7 methyltransferase family. Requires Mg(2+) as cofactor.

It participates in mycotoxin biosynthesis. Functionally, methyltransferase; part of the gene cluster that mediates the biosynthesis of the mycotoxin fusarin C. Within the cluster, FUS1, FUS2, FUS8 and FUS9 are sufficient for fusarin production. The roles of the other FUS members are yet undetermined. The fusarin C synthetase FUS1 is responsible for the condensation of one acetyl-coenzyme A (CoA) unit with six malonyl-CoA units and the amide linkage of the arising heptaketide and homoserine, subsequently releasing the first intermediate, prefusarin, as an alcohol with an open ring structure. The cytochrome P450 monooxygenase FUS8 participates in multiple oxidation processes at carbon C-20 and is able to use the FUS1 product as substrate, resulting in formation of 20-hydroxy-prefusarin. This reaction seems to be essential before the 2-pyrrolidone ring closure can be catalyzed by FUS2, generating 20-hydroxy-fusarin. FUS8 is able to further oxidizes carbon C-20 after ring closure, resulting in the formation of carboxy-fusarin C. As the last step, FUS9 methylates the hydroxyl group at C-21 to generate fusarin C. Fusarin C can then rearrange to epi-fusarin C, the (z)-isomers, and fusarin A and fusarin D. This Gibberella fujikuroi (strain CBS 195.34 / IMI 58289 / NRRL A-6831) (Bakanae and foot rot disease fungus) protein is Methyltransferase FUS9.